Consider the following 182-residue polypeptide: Ribosome maturation factor RimM (182 aa).

The region spanning 103 to 182 (EGDYYWKDLM…TIEVDWDPGF (80 aa)) is the PRC barrel domain.

It belongs to the RimM family. Binds ribosomal protein uS19.

The protein localises to the cytoplasm. Functionally, an accessory protein needed during the final step in the assembly of 30S ribosomal subunit, possibly for assembly of the head region. Essential for efficient processing of 16S rRNA. May be needed both before and after RbfA during the maturation of 16S rRNA. It has affinity for free ribosomal 30S subunits but not for 70S ribosomes. The polypeptide is Ribosome maturation factor RimM (Klebsiella pneumoniae subsp. pneumoniae (strain ATCC 700721 / MGH 78578)).